The chain runs to 294 residues: Cell division protein ZipA (294 aa).

A topological domain (periplasmic) is located at residue methionine 1. Residues 2 to 22 (EIGLREWLILIGIIVIAGILF) traverse the membrane as a helical segment. The Cytoplasmic portion of the chain corresponds to 23–294 (DGWRRMRGGK…FERRALTQKR (272 aa)). The tract at residues 47–107 (PDEEGSAEVL…GKRAAEMQPQ (61 aa)) is disordered. Positions 82-91 (AREREREQKP) are enriched in basic and acidic residues.

This sequence belongs to the ZipA family. As to quaternary structure, interacts with FtsZ via their C-terminal domains.

The protein resides in the cell inner membrane. Essential cell division protein that stabilizes the FtsZ protofilaments by cross-linking them and that serves as a cytoplasmic membrane anchor for the Z ring. Also required for the recruitment to the septal ring of downstream cell division proteins. This chain is Cell division protein ZipA, found in Pseudomonas putida (strain W619).